We begin with the raw amino-acid sequence, 115 residues long: Ig kappa chain V region 3315 (115 aa).

Residues 1-24 (AQIVMTQTPSSVSAAVGGTVTINC) form a framework-1 region. A complementarity-determining-1 region spans residues 25–37 (QSSQSVYENGRLS). The interval 38–52 (WFQQKPGQPPKRLIY) is framework-2. Residues 53–59 (RASTLAS) form a complementarity-determining-2 region. The framework-3 stretch occupies residues 60 to 91 (GVSSRFTGSGSGTQFTLSISDVQCDDAATYYC). The interval 92-104 (LGNYDCSSGDSFT) is complementarity-determining-3. Positions 105-114 (FGGGTEVVVK) are framework-4.

This is Ig kappa chain V region 3315 from Oryctolagus cuniculus (Rabbit).